We begin with the raw amino-acid sequence, 134 residues long: Small ribosomal subunit protein bS16 (134 aa).

A disordered region spans residues 81-134; that stretch reads LAKRPARSNPKKAEPGKKAQERLAAARQAEEEAKAAAEAAAAAPAEAPAEEAAS. Over residues 91–101 the composition is skewed to basic and acidic residues; it reads KKAEPGKKAQE. Positions 116–134 are enriched in low complexity; the sequence is AAEAAAAAPAEAPAEEAAS.

This sequence belongs to the bacterial ribosomal protein bS16 family.

This is Small ribosomal subunit protein bS16 from Chelativorans sp. (strain BNC1).